The following is a 61-amino-acid chain: Large ribosomal subunit protein uL30 (61 aa).

Belongs to the universal ribosomal protein uL30 family. Part of the 50S ribosomal subunit.

In Caulobacter vibrioides (strain ATCC 19089 / CIP 103742 / CB 15) (Caulobacter crescentus), this protein is Large ribosomal subunit protein uL30.